The following is a 148-amino-acid chain: MDVILLEKVPNLGSLGDKVSVRPGYGRNFLIPKGKAVAATAAKLAEFEQRRAELEKKASEELAAAQARAEAVARLNVSIAQKAGEEGKLYGSVGTKDIAEAVTAAGVPVERHEVRLPHGPIRLAGDYEITLHLHSDVNATLNLKVIGE.

Belongs to the bacterial ribosomal protein bL9 family.

In terms of biological role, binds to the 23S rRNA. The sequence is that of Large ribosomal subunit protein bL9 from Methylococcus capsulatus (strain ATCC 33009 / NCIMB 11132 / Bath).